Consider the following 192-residue polypeptide: Adenylate kinase (192 aa).

An ATP-binding site is contributed by 10–15 (GAGKGT). Positions 30–59 (STGDMLREVIRRETEIGKKAKAMINAGTLV) are NMP. Residues Thr31, Arg36, 57-59 (TLV), 85-88 (GYPR), and Gln92 contribute to the AMP site. Positions 126-142 (KRVQETIIAGGQVRSDD) are LID. Residue Arg127 participates in ATP binding. 2 residues coordinate AMP: Arg139 and Arg150. Ile178 lines the ATP pocket.

This sequence belongs to the adenylate kinase family. In terms of assembly, monomer.

It localises to the cytoplasm. The enzyme catalyses AMP + ATP = 2 ADP. It participates in purine metabolism; AMP biosynthesis via salvage pathway; AMP from ADP: step 1/1. Its function is as follows. Catalyzes the reversible transfer of the terminal phosphate group between ATP and AMP. Plays an important role in cellular energy homeostasis and in adenine nucleotide metabolism. The chain is Adenylate kinase from Bartonella henselae (strain ATCC 49882 / DSM 28221 / CCUG 30454 / Houston 1) (Rochalimaea henselae).